The sequence spans 265 residues: MAVGWFYLSVLALCSLGSMCILFTIYWMRYWHGGFAWDGSMLMFNWHPVLMVTGMVVLYSAASLVYRLPQSWVGPRLPWKSGHAAMHLLAFLLTVLGLHAVFEFHNHAKIPHLYSLHSWLGITTVFLFACQWFLGFSVFLLPWASMWLRSLLKPIHVFFGASILSLAIASVVSGINEKLFFSLKNGTKTYSNLPSEAVFANCAGMLVVVFGLLVLYILLASSWKRPEPGMQAEREPTRTRGRAGTPEVMLEGERGLAEPLLQKRS.

Over 1–2 the chain is Cytoplasmic; it reads MA. The chain crosses the membrane as a helical span at residues 3 to 23; it reads VGWFYLSVLALCSLGSMCILF. The Cytochrome b561 domain maps to 12–219; that stretch reads ALCSLGSMCI…FGLLVLYILL (208 aa). At 24-45 the chain is on the lumenal side; that stretch reads TIYWMRYWHGGFAWDGSMLMFN. A helical membrane pass occupies residues 46 to 66; the sequence is WHPVLMVTGMVVLYSAASLVY. Heme b contacts are provided by H47 and R67. Residues 67 to 83 lie on the Cytoplasmic side of the membrane; that stretch reads RLPQSWVGPRLPWKSGH. 2 residues coordinate L-ascorbate: R76 and K80. H83 is a heme b binding site. A helical membrane pass occupies residues 84 to 104; that stretch reads AAMHLLAFLLTVLGLHAVFEF. Residues 105–119 are Lumenal-facing; it reads HNHAKIPHLYSLHSW. Residues 112-115 and H117 each bind heme b; that span reads HLYS. A helical transmembrane segment spans residues 120 to 140; it reads LGITTVFLFACQWFLGFSVFL. Residues 141-154 are Cytoplasmic-facing; the sequence is LPWASMWLRSLLKP. Position 149 (R149) interacts with L-ascorbate. The chain crosses the membrane as a helical span at residues 155–175; the sequence is IHVFFGASILSLAIASVVSGI. Residues H156 and E177 each coordinate heme b. Residues 176–197 lie on the Lumenal side of the membrane; that stretch reads NEKLFFSLKNGTKTYSNLPSEA. The N-linked (GlcNAc...) asparagine glycan is linked to N185. The helical transmembrane segment at 198–218 threads the bilayer; sequence VFANCAGMLVVVFGLLVLYIL. The Cytoplasmic segment spans residues 219 to 265; that stretch reads LASSWKRPEPGMQAEREPTRTRGRAGTPEVMLEGERGLAEPLLQKRS. K224 is a binding site for heme b. The segment covering 228 to 238 has biased composition (basic and acidic residues); sequence PGMQAEREPTR. The interval 228–265 is disordered; sequence PGMQAEREPTRTRGRAGTPEVMLEGERGLAEPLLQKRS.

As to quaternary structure, homodimer. It depends on heme b as a cofactor. Post-translationally, N-glycosylated.

It is found in the late endosome membrane. The protein resides in the lysosome membrane. It carries out the reaction Fe(3+)(out) + L-ascorbate(in) = monodehydro-L-ascorbate radical(in) + Fe(2+)(out) + H(+). In terms of biological role, transmembrane reductase that uses ascorbate as an electron donor in the cytoplasm and transfers electrons across membranes to reduce iron cations Fe(3+) into Fe(2+) in the lumen of the late endosome and lysosome. Reduced iron can then be extruded from the late endosome and lysosome to the cytoplasm by divalent metal-specific transporters. It is therefore most probably involved in endosomal and lysosomal cellular iron homeostasis. The sequence is that of Lysosomal membrane ascorbate-dependent ferrireductase CYB561A3 from Bos taurus (Bovine).